The chain runs to 1121 residues: Cilia- and flagella-associated protein 70 (1121 aa).

Positions 410–428 (NLKEDKPVKEKDIDGRPRP) are enriched in basic and acidic residues. The segment at 410-457 (NLKEDKPVKEKDIDGRPRPGDVQAPSIKSQSSDTPLEGEPPLSHNPEG) is disordered. TPR repeat units lie at residues 635–668 (SEQL…EPQN), 669–702 (LDHW…NQSH), and 704–736 (HSLL…EPTN). 2 disordered regions span residues 778-802 (KQKS…PWGI) and 836-858 (QSDS…QKPS). 5 TPR repeats span residues 929–962 (CEYY…DYLN), 963–996 (PNVW…VVDA), 1000–1033 (HFIF…SPSC), 1035–1066 (TWLG…NNYN), and 1068–1100 (EVWA…KLKD).

Belongs to the CFAP70 family. As to expression, expressed in testis.

Its subcellular location is the cell projection. It localises to the cilium. The protein localises to the flagellum. The protein resides in the cytoplasm. It is found in the cytoskeleton. Its subcellular location is the flagellum basal body. It localises to the cilium axoneme. Functionally, axoneme-binding protein that plays a role in the regulation of ciliary motility and cilium length. The sequence is that of Cilia- and flagella-associated protein 70 from Homo sapiens (Human).